The following is a 287-amino-acid chain: Ethylene-responsive transcription factor ERF116 (287 aa).

Residues 80–140 constitute a DNA-binding region (AP2/ERF); sequence YPVGVRPRPS…ASSGSAVSSS (61 aa).

This sequence belongs to the AP2/ERF transcription factor family. ERF subfamily.

The protein localises to the nucleus. Its function is as follows. Probably acts as a transcriptional activator. Binds to the GCC-box pathogenesis-related promoter element. May be involved in the regulation of gene expression by stress factors and by components of stress signal transduction pathways. In Arabidopsis thaliana (Mouse-ear cress), this protein is Ethylene-responsive transcription factor ERF116 (ERF116).